We begin with the raw amino-acid sequence, 541 residues long: Tyrosine-protein phosphatase non-receptor type 5 (541 aa).

Residues M1–S55 are disordered. Positions M32–E43 are enriched in pro residues. The next 2 membrane-spanning stretches (helical) occupy residues L64–H84 and L122–L142. The residue at position 221 (S221) is a Phosphoserine; by PKA. The residue at position 231 (T231) is a Phosphothreonine; by MAPK. Phosphoserine; by MAPK is present on S244. The region spanning L276–Y531 is the Tyrosine-protein phosphatase domain. Residues D437, C472 to R478, and Q516 contribute to the substrate site. The active-site Phosphocysteine intermediate is C472.

Belongs to the protein-tyrosine phosphatase family. Non-receptor class subfamily. Post-translationally, phosphorylation at Ser-221 by PKA deactivates PTPN5. Phosphorylation at Thr-231 and Ser-244 by MAPKs stabilizes the phosphatase, dephosphorylation of these sites results in ubiquitin-mediated degradation of the active phosphatase. In terms of tissue distribution, STEP20 is expressed only in the CNS.

It localises to the endoplasmic reticulum membrane. The protein localises to the cytoplasm. It carries out the reaction O-phospho-L-tyrosyl-[protein] + H2O = L-tyrosyl-[protein] + phosphate. Functionally, may regulate the activity of several effector molecules involved in synaptic plasticity and neuronal cell survival, including MAPKs, Src family kinases and NMDA receptors. This chain is Tyrosine-protein phosphatase non-receptor type 5 (Ptpn5), found in Mus musculus (Mouse).